A 456-amino-acid polypeptide reads, in one-letter code: Rap guanine nucleotide exchange factor-like 1 (456 aa).

In terms of domain architecture, Ras-GEF spans 218-454 (EPEDVANHLT…FELSYKLEAN (237 aa)).

Functionally, probable guanine nucleotide exchange factor (GEF). This chain is Rap guanine nucleotide exchange factor-like 1 (RAPGEFL1), found in Pongo pygmaeus (Bornean orangutan).